The sequence spans 158 residues: Cyclic pyranopterin monophosphate synthase (158 aa).

Substrate-binding positions include 75–77 (LCH) and 113–114 (ME). Aspartate 128 is an active-site residue.

The protein belongs to the MoaC family. As to quaternary structure, homohexamer; trimer of dimers.

It carries out the reaction (8S)-3',8-cyclo-7,8-dihydroguanosine 5'-triphosphate = cyclic pyranopterin phosphate + diphosphate. It functions in the pathway cofactor biosynthesis; molybdopterin biosynthesis. In terms of biological role, catalyzes the conversion of (8S)-3',8-cyclo-7,8-dihydroguanosine 5'-triphosphate to cyclic pyranopterin monophosphate (cPMP). This chain is Cyclic pyranopterin monophosphate synthase, found in Ralstonia pickettii (strain 12J).